The primary structure comprises 224 residues: V-type ATP synthase subunit D (224 aa).

Residues 205-214 (AKAKQQRKDI) show a composition bias toward basic and acidic residues. The segment at 205-224 (AKAKQQRKDIQSGNHGSAAD) is disordered. A compositionally biased stretch (polar residues) spans 215-224 (QSGNHGSAAD).

It belongs to the V-ATPase D subunit family.

Functionally, produces ATP from ADP in the presence of a proton gradient across the membrane. The chain is V-type ATP synthase subunit D from Deinococcus deserti (strain DSM 17065 / CIP 109153 / LMG 22923 / VCD115).